The primary structure comprises 366 residues: N-methyltransferase fsqC (366 aa).

An N-terminal signal peptide occupies residues 1–18 (MSSNVQDIRGWPPPFANA). Asn270 is a glycosylation site (N-linked (GlcNAc...) asparagine).

The protein belongs to the methyltransferase superfamily.

It participates in secondary metabolite biosynthesis. Functionally, N-methyltransferase; part of the gene cluster that mediates the biosynthesis of the isoquinoline alkaloids fumisoquin A, fumisoquin B and fumisoquin C; as well as small amounts of fumipyrrole as a shunt metabolite. The products of the cluster lead to a brown coloration and are important for growth and conidiation. The nonribosomal peptide synthetase-like protein fsqF, which lacks a canonical condensation domain, is required for addition of a serine-derived dehydroalanine moiety to activated tyrosine but is not essential for the subsequent steps leading to isoquinoline formation. A different enzyme, most likely the ATP-grasp enzyme fsqD, is responsible for activation of tyrosine. Three additional enzymes encoded by the fsq cluster, the N-methyltransferase fsqC, the phenol 2-monooxygenase fsqG and the FAD-dependent oxidase fsqB, catalyze the formation of the isoquinoline ring system in the fumisoquins. FsqB converts the fspF thiolation domain-bound (2S,4S,5S)-2-amino-6-(3,4-dihydroxyphenyl)-4-hydroxy-5-(methylamino)hexanoyl into isoquinoline. The cyclization most likely proceeds via a two-step mechanism, beginning with FAD-dependent oxidation of the methyl group to an iminium species followed by electrophilic attack on the deprotonated phenol. This is N-methyltransferase fsqC from Aspergillus fumigatus (strain ATCC MYA-4609 / CBS 101355 / FGSC A1100 / Af293) (Neosartorya fumigata).